Here is a 144-residue protein sequence, read N- to C-terminus: UPF0292 protein MA_4098 (144 aa).

The Toprim domain maps to 28–109 (GAVIIVEGKR…KPELQIRNKL (82 aa)). Mg(2+)-binding residues include E34, D78, and D80.

This sequence belongs to the UPF0292 family. Requires Mg(2+) as cofactor.

This Methanosarcina acetivorans (strain ATCC 35395 / DSM 2834 / JCM 12185 / C2A) protein is UPF0292 protein MA_4098.